Consider the following 407-residue polypeptide: Tryptophan synthase beta chain (407 aa).

Lys98 bears the N6-(pyridoxal phosphate)lysine mark.

This sequence belongs to the TrpB family. In terms of assembly, tetramer of two alpha and two beta chains. Pyridoxal 5'-phosphate is required as a cofactor.

The enzyme catalyses (1S,2R)-1-C-(indol-3-yl)glycerol 3-phosphate + L-serine = D-glyceraldehyde 3-phosphate + L-tryptophan + H2O. The protein operates within amino-acid biosynthesis; L-tryptophan biosynthesis; L-tryptophan from chorismate: step 5/5. Its function is as follows. The beta subunit is responsible for the synthesis of L-tryptophan from indole and L-serine. In Bradyrhizobium sp. (strain ORS 278), this protein is Tryptophan synthase beta chain.